The chain runs to 335 residues: MDAEGEQKSNGVKEPNTPLREALDEIFLNVGYLLRSLLANVPNALYHSQLQAACQKFQDYCDLEEIRIIEAKRVVERDLRSLEAKEVEEKSQFASFVSATPPGANSLQGNVSLPSGNNFFTSSFDSENISKPGEVSLSESQLLGNLNQQSSIQLPDRMPKTTNGTLADPNMPPKTTVNDQDVTKDASQQFGGSNFSNYLRDNDSFQFGMNTDASGDAHLQASEFLLPNLFGNSSTSPQDNFGTSNSALSRNLDLFGSPSSENKSTAGSASLFPNQQMGIDLQAQENYSAAFGNDGSFASHLTNTFDNALNLPTDIPTTESINDLFGENFDFTMTK.

Disordered regions lie at residues 152–179 (IQLPDRMPKTTNGTLADPNMPPKTTVND) and 252–271 (LDLFGSPSSENKSTAGSASL). Phosphoserine occurs at positions 257 and 260. Over residues 257–271 (SPSSENKSTAGSASL) the composition is skewed to polar residues.

This is an uncharacterized protein from Schizosaccharomyces pombe (strain 972 / ATCC 24843) (Fission yeast).